Consider the following 568-residue polypeptide: Archaeosine synthase subunit alpha (568 aa).

Residues 496 to 565 (YDALKSYWVK…AKKGVAVKVR (70 aa)) enclose the PUA domain.

It belongs to the archaeosine synthase type 1 family. Forms a robust complex with the archaeosine synthase beta subunit RaSEA, likely an alpha(2)beta(2) heterotetrameric structure. Formation of this complex highly increases lysine transfer activity.

The enzyme catalyses 7-cyano-7-carbaguanosine(15) in tRNA + L-lysine = 7-N-[(5S)-5-amino-5-carboxypentyl]formamidino-7-deazaguanosine(15) in tRNA. It participates in tRNA modification; archaeosine-tRNA biosynthesis. Its function is as follows. Functions in the biosynthesis of archaeosine, a modified nucleoside present in the dihydrouridine loop (D-loop) of archaeal tRNAs. Catalyzes the addition of L-lysine to the cyano group of 7-cyano-7-deazaguanine (preQ0)-modified tRNAs at position 15, to generate q0kN15-tRNA, a q0N lysine adduct identified as 7-N-[(5S)-5-amino-5-carboxypentyl]formamidino-7-deazaguanosine. The protein is Archaeosine synthase subunit alpha of Thermococcus kodakarensis (strain ATCC BAA-918 / JCM 12380 / KOD1) (Pyrococcus kodakaraensis (strain KOD1)).